The sequence spans 204 residues: MNAIIIDDHPLAIAAIRNLLIKNDIEILAELTEGGSAVQRVETLKPDIVIIDVDIPGVNGIQVLETLRKRQYSGIIIIVSAKNDHFYGKHCADAGANGFVSKKEGMNNIIAAIEAAKNGYCYFPFSLNRFVGSLTSDQQKLDSLSKQEISVMRYILDGKDNNDIAEKMFISNKTVSTYKSRLMEKLECKSLMDLYTFAQRNKIG.

A Response regulatory domain is found at 2-117 (NAIIIDDHPL…NIIAAIEAAK (116 aa)). A 4-aspartylphosphate modification is found at Asp52. One can recognise an HTH luxR-type domain in the interval 137-202 (DQQKLDSLSK…DLYTFAQRNK (66 aa)). Residues 161-180 (NNDIAEKMFISNKTVSTYKS) constitute a DNA-binding region (H-T-H motif).

Homodimer. Phosphorylated by EvgS.

It localises to the cytoplasm. Member of the two-component regulatory system EvgS/EvgA. Regulates the expression of emrKY operon and yfdX. Also seems to control expression of at least one other multidrug efflux operon. This chain is DNA-binding transcriptional activator EvgA (evgA), found in Escherichia coli O157:H7.